The following is a 526-amino-acid chain: Peptide chain release factor 3 (526 aa).

Residues Asp-9–Leu-277 form the tr-type G domain. GTP is bound by residues Ser-18–Thr-25, Asp-86–His-90, and Asn-140–Asp-143.

This sequence belongs to the TRAFAC class translation factor GTPase superfamily. Classic translation factor GTPase family. PrfC subfamily.

The protein resides in the cytoplasm. In terms of biological role, increases the formation of ribosomal termination complexes and stimulates activities of RF-1 and RF-2. It binds guanine nucleotides and has strong preference for UGA stop codons. It may interact directly with the ribosome. The stimulation of RF-1 and RF-2 is significantly reduced by GTP and GDP, but not by GMP. This chain is Peptide chain release factor 3, found in Shewanella sp. (strain MR-4).